Reading from the N-terminus, the 159-residue chain is 2-C-methyl-D-erythritol 2,4-cyclodiphosphate synthase (159 aa).

Residues Asp-10 and His-12 each contribute to the a divalent metal cation site. 4-CDP-2-C-methyl-D-erythritol 2-phosphate is bound by residues 10–12 (DVH) and 36–37 (HS). His-44 contributes to the a divalent metal cation binding site. Residues 58-60 (DIG), 63-67 (FPDTD), 102-108 (AQAPKMA), 134-137 (TTTE), Phe-141, and Arg-144 each bind 4-CDP-2-C-methyl-D-erythritol 2-phosphate.

This sequence belongs to the IspF family. As to quaternary structure, homotrimer. A divalent metal cation is required as a cofactor.

The enzyme catalyses 4-CDP-2-C-methyl-D-erythritol 2-phosphate = 2-C-methyl-D-erythritol 2,4-cyclic diphosphate + CMP. It functions in the pathway isoprenoid biosynthesis; isopentenyl diphosphate biosynthesis via DXP pathway; isopentenyl diphosphate from 1-deoxy-D-xylulose 5-phosphate: step 4/6. In terms of biological role, involved in the biosynthesis of isopentenyl diphosphate (IPP) and dimethylallyl diphosphate (DMAPP), two major building blocks of isoprenoid compounds. Catalyzes the conversion of 4-diphosphocytidyl-2-C-methyl-D-erythritol 2-phosphate (CDP-ME2P) to 2-C-methyl-D-erythritol 2,4-cyclodiphosphate (ME-CPP) with a corresponding release of cytidine 5-monophosphate (CMP). The chain is 2-C-methyl-D-erythritol 2,4-cyclodiphosphate synthase from Shewanella piezotolerans (strain WP3 / JCM 13877).